The following is a 338-amino-acid chain: MTDHALLLVNLGSPASTSVADVRRYLNQFLMDPYVVDLPWPVRRLLVSLILIKRPEQSAHAYASIWWEEGSPLVVLTRRLQAAMVEHWPHGPVEIAMRYGQPALPDVLERLAAQGVRKVTLAPLYPQFADSTVTTVVDLAKQTVSERQLPLQMRVLQPFYEHPAYIEALAASARPHLETGYDHLLLSFHGLPERHLKKLFPKGVKHDLRAADCCHGATAEVRSVCYRGQCLATAKAFAQKMGIPDGKWSVSFQSRLGRDKWIEPYTETRLDELAKAGVKKLLVMCPAFVADCIETLEEIGMRGSEQFVEAGGRELVLVPCLNDHPEWVRVLADMCEKA.

Fe cation-binding residues include histidine 189 and glutamate 294.

Belongs to the ferrochelatase family.

It localises to the cytoplasm. The catalysed reaction is heme b + 2 H(+) = protoporphyrin IX + Fe(2+). It functions in the pathway porphyrin-containing compound metabolism; protoheme biosynthesis; protoheme from protoporphyrin-IX: step 1/1. Its function is as follows. Catalyzes the ferrous insertion into protoporphyrin IX. This Pseudomonas putida (strain ATCC 700007 / DSM 6899 / JCM 31910 / BCRC 17059 / LMG 24140 / F1) protein is Ferrochelatase.